A 292-amino-acid polypeptide reads, in one-letter code: ATP synthase gamma chain (292 aa).

Belongs to the ATPase gamma chain family. F-type ATPases have 2 components, CF(1) - the catalytic core - and CF(0) - the membrane proton channel. CF(1) has five subunits: alpha(3), beta(3), gamma(1), delta(1), epsilon(1). CF(0) has three main subunits: a, b and c.

It is found in the cell inner membrane. In terms of biological role, produces ATP from ADP in the presence of a proton gradient across the membrane. The gamma chain is believed to be important in regulating ATPase activity and the flow of protons through the CF(0) complex. This is ATP synthase gamma chain from Bradyrhizobium sp. (strain ORS 278).